Consider the following 532-residue polypeptide: Probable cyclic di-GMP phosphodiesterase PdeD (532 aa).

Transmembrane regions (helical) follow at residues 16 to 36 (MIVC…VRFI) and 245 to 265 (LPLA…ATAY). An EAL domain is found at 266-515 (RMSFSREINL…DFPKWLAGSQ (250 aa)).

The protein resides in the cell membrane. The catalysed reaction is 3',3'-c-di-GMP + H2O = 5'-phosphoguanylyl(3'-&gt;5')guanosine + H(+). In terms of biological role, phosphodiesterase (PDE) that catalyzes the hydrolysis of cyclic-di-GMP (c-di-GMP) to 5'-pGpG. May serve as a negative regulator of cellulose synthesis (as has been suggested for S.typhimurium); overexpression inhibits cell aggregation in strains able to produce adhesive curli fimbriae. Cyclic-di-GMP is a second messenger which controls cell surface-associated traits in bacteria. The chain is Probable cyclic di-GMP phosphodiesterase PdeD from Escherichia coli (strain K12).